The chain runs to 102 residues: Acid shock protein (102 aa).

Residues 1–21 form the signal peptide; it reads MKKVLGLVVAAAMGLSSAAFA. Residues 22–41 show a composition bias toward low complexity; sequence AETATTPAPTATTTKAAPAK. A propeptide spanning residues 22–58 is cleaved from the precursor; it reads AETATTPAPTATTTKAAPAKTTHHKKQHKAAPAQKAQ. Residues 22 to 102 form a disordered region; the sequence is AETATTPAPT…PAKPAAQPAA (81 aa). The segment covering 80 to 90 has biased composition (basic residues); that stretch reads AAKKHAGKHSH. The segment covering 91 to 102 has biased composition (low complexity); that stretch reads QQPAKPAAQPAA.

This sequence belongs to the Asr family. Post-translationally, proteolytic processing gives rise to the active protein.

Its subcellular location is the periplasm. Functionally, required for growth and/or survival at acidic conditions. This chain is Acid shock protein, found in Escherichia coli (strain SE11).